A 320-amino-acid polypeptide reads, in one-letter code: MNFFTHKKNNFGSFVTIFSFLVALGVTNLTPAAEAYPIFAQQNYENPREANGRIVCANCHLAQKPVELEVPQAVLPDTVFEAVVKIPYDQQVQQVLGNGKKGDLNVGMVLILPDGFELAPADRVPEEMKKKVGKLFYQPYSPDKKNILVVGPVPGKKYSEMVIPILSPDPATNKNVSFLKYPIYFGGNRGRGQVYPDGSKSNNTVYNSSVTGKISNIAPFDKKGGVEITIETANGDSIVEKIPAGPQVIVTQGQTVQPDQPLTNNPNVGGFGQKDVEIVLQNPARIQGLLVFFATVLFAQVLLVLKKKQFEKVQLAEMNF.

The N-terminal stretch at 1–35 (MNFFTHKKNNFGSFVTIFSFLVALGVTNLTPAAEA) is a signal peptide. Residues Tyr-36, Cys-56, Cys-59, and His-60 each contribute to the heme site. The helical transmembrane segment at 286 to 306 (IQGLLVFFATVLFAQVLLVLK) threads the bilayer.

It belongs to the cytochrome f family. In terms of assembly, the 4 large subunits of the cytochrome b6-f complex are cytochrome b6, subunit IV (17 kDa polypeptide, petD), cytochrome f and the Rieske protein, while the 4 small subunits are PetG, PetL, PetM and PetN. The complex functions as a dimer. The cofactor is heme.

Its subcellular location is the plastid. The protein localises to the chloroplast thylakoid membrane. Component of the cytochrome b6-f complex, which mediates electron transfer between photosystem II (PSII) and photosystem I (PSI), cyclic electron flow around PSI, and state transitions. This is Cytochrome f from Tetradesmus obliquus (Green alga).